The primary structure comprises 306 residues: Protoheme IX farnesyltransferase (306 aa).

Transmembrane regions (helical) follow at residues 28–48 (LGLV…AIML), 53–73 (FLSS…IMAG), 105–125 (ASIL…LFTI), 127–147 (IETG…YSVW), 156–176 (TIIG…AIEP), 182–202 (AWML…ALAI), 227–244 (LSML…FFMQ), 246–266 (LGTV…LLAI), and 283–303 (FVYS…VTLI).

It belongs to the UbiA prenyltransferase family. Protoheme IX farnesyltransferase subfamily. In terms of assembly, interacts with CtaA.

The protein resides in the cell membrane. The catalysed reaction is heme b + (2E,6E)-farnesyl diphosphate + H2O = Fe(II)-heme o + diphosphate. It functions in the pathway porphyrin-containing compound metabolism; heme O biosynthesis; heme O from protoheme: step 1/1. Functionally, converts heme B (protoheme IX) to heme O by substitution of the vinyl group on carbon 2 of heme B porphyrin ring with a hydroxyethyl farnesyl side group. In Macrococcus caseolyticus (strain JCSC5402) (Macrococcoides caseolyticum), this protein is Protoheme IX farnesyltransferase.